A 297-amino-acid chain; its full sequence is HTH-type transcriptional regulator ArgP (297 aa).

The 57-residue stretch at 4–60 (PDYRTLQALDAVIRERGFERAAQKLCITQSAVSQRIKQLENMFGQPLLVRTVPPRPT) folds into the HTH lysR-type domain. A DNA-binding region (H-T-H motif) is located at residues 21–40 (FERAAQKLCITQSAVSQRIK).

Belongs to the LysR transcriptional regulatory family. Homodimer.

Functionally, controls the transcription of genes involved in arginine and lysine metabolism. The protein is HTH-type transcriptional regulator ArgP of Klebsiella pneumoniae (strain 342).